A 387-amino-acid polypeptide reads, in one-letter code: Natterin-4 (387 aa).

A signal peptide spans 1-18 (MKLLVLLVTLLVLSWTSA). A propeptide spanning residues 19–46 (EDVGDQEILQQHNEDNNHKSELGEAAPQ) is cleaved from the precursor. Residues 31-40 (NEDNNHKSEL) show a composition bias toward basic and acidic residues. The interval 31–57 (NEDNNHKSELGEAAPQRTDNETSQLGQ) is disordered.

This sequence belongs to the natterin family. Post-translationally, contains 4 disulfide bonds. Expressed by the venom gland.

Its subcellular location is the secreted. Inhibited by tissue-kallikrein inhibitor TKI and trasylol. Plasma kallikrein inhibitor PKSI527 and classical inhibitors of serine-, metallo-, thiol- or aspartate-peptidases evokes a minor inhibition of the peptide digestion. Functionally, shows nociceptive, edema-inducing and kininogenase activity with release of kallidin from low molecular weight kininogen. The cleavage occurs at Met-Lys bonds. The chain is Natterin-4 from Thalassophryne nattereri (Copper Joe toadfish).